Reading from the N-terminus, the 293-residue chain is Nucleotide-binding protein Dole_0503 (293 aa).

Residue 11–18 participates in ATP binding; sequence GLSGSGKS. GTP is bound at residue 62 to 65; it reads DLRE.

Belongs to the RapZ-like family.

In terms of biological role, displays ATPase and GTPase activities. The chain is Nucleotide-binding protein Dole_0503 from Desulfosudis oleivorans (strain DSM 6200 / JCM 39069 / Hxd3) (Desulfococcus oleovorans).